A 201-amino-acid polypeptide reads, in one-letter code: Probable chemoreceptor glutamine deamidase CheD 1 (201 aa).

Belongs to the CheD family.

It catalyses the reaction L-glutaminyl-[protein] + H2O = L-glutamyl-[protein] + NH4(+). Its function is as follows. Probably deamidates glutamine residues to glutamate on methyl-accepting chemotaxis receptors (MCPs), playing an important role in chemotaxis. The polypeptide is Probable chemoreceptor glutamine deamidase CheD 1 (Geobacter sulfurreducens (strain ATCC 51573 / DSM 12127 / PCA)).